The primary structure comprises 286 residues: 2-dehydro-3-deoxyphosphooctonate aldolase (286 aa).

It belongs to the KdsA family.

The protein resides in the cytoplasm. It carries out the reaction D-arabinose 5-phosphate + phosphoenolpyruvate + H2O = 3-deoxy-alpha-D-manno-2-octulosonate-8-phosphate + phosphate. The protein operates within carbohydrate biosynthesis; 3-deoxy-D-manno-octulosonate biosynthesis; 3-deoxy-D-manno-octulosonate from D-ribulose 5-phosphate: step 2/3. Its pathway is bacterial outer membrane biogenesis; lipopolysaccharide biosynthesis. The chain is 2-dehydro-3-deoxyphosphooctonate aldolase from Haemophilus ducreyi (strain 35000HP / ATCC 700724).